A 414-amino-acid polypeptide reads, in one-letter code: Ribulose bisphosphate carboxylase large chain (414 aa).

The substrate site is built by asparagine 102 and threonine 152. Lysine 154 (proton acceptor) is an active-site residue. A substrate-binding site is contributed by lysine 156. Positions 180, 182, and 183 each coordinate Mg(2+). An N6-carboxylysine modification is found at lysine 180. Catalysis depends on histidine 273, which acts as the Proton acceptor. Arginine 274, histidine 306, and serine 358 together coordinate substrate.

It belongs to the RuBisCO large chain family. Type I subfamily. In terms of assembly, heterohexadecamer of 8 large chains and 8 small chains; disulfide-linked. The disulfide link is formed within the large subunit homodimers. Requires Mg(2+) as cofactor. In terms of processing, the disulfide bond which can form in the large chain dimeric partners within the hexadecamer appears to be associated with oxidative stress and protein turnover.

Its subcellular location is the plastid. It localises to the chloroplast. It carries out the reaction 2 (2R)-3-phosphoglycerate + 2 H(+) = D-ribulose 1,5-bisphosphate + CO2 + H2O. The enzyme catalyses D-ribulose 1,5-bisphosphate + O2 = 2-phosphoglycolate + (2R)-3-phosphoglycerate + 2 H(+). In terms of biological role, ruBisCO catalyzes two reactions: the carboxylation of D-ribulose 1,5-bisphosphate, the primary event in carbon dioxide fixation, as well as the oxidative fragmentation of the pentose substrate in the photorespiration process. Both reactions occur simultaneously and in competition at the same active site. The polypeptide is Ribulose bisphosphate carboxylase large chain (rbcL) (Antrophyum reticulatum (Ox-tongue fern)).